Here is a 485-residue protein sequence, read N- to C-terminus: Inosine-5'-monophosphate dehydrogenase (485 aa).

CBS domains are found at residues 99–154 and 156–212; these read IVED…TVKE and MTRE…KNAV. Residues Asp-247 and 294 to 296 each bind NAD(+); that span reads GIG. 2 residues coordinate K(+): Gly-296 and Gly-298. Ser-299 lines the IMP pocket. Cys-301 is a binding site for K(+). Cys-301 serves as the catalytic Thioimidate intermediate. IMP is bound by residues 334 to 336, 357 to 358, and 381 to 385; these read DGG, GN, and YRGMG. Arg-397 acts as the Proton acceptor in catalysis. Glu-412 contacts IMP. Residues Glu-466, Ser-467, and His-468 each contribute to the K(+) site.

The protein belongs to the IMPDH/GMPR family. As to quaternary structure, homotetramer. The cofactor is K(+).

The enzyme catalyses IMP + NAD(+) + H2O = XMP + NADH + H(+). Its pathway is purine metabolism; XMP biosynthesis via de novo pathway; XMP from IMP: step 1/1. Mycophenolic acid (MPA) is a non-competitive inhibitor that prevents formation of the closed enzyme conformation by binding to the same site as the amobile flap. In contrast, mizoribine monophosphate (MZP) is a competitive inhibitor that induces the closed conformation. MPA is a potent inhibitor of mammalian IMPDHs but a poor inhibitor of the bacterial enzymes. MZP is a more potent inhibitor of bacterial IMPDH. Its function is as follows. Catalyzes the conversion of inosine 5'-phosphate (IMP) to xanthosine 5'-phosphate (XMP), the first committed and rate-limiting step in the de novo synthesis of guanine nucleotides, and therefore plays an important role in the regulation of cell growth. The polypeptide is Inosine-5'-monophosphate dehydrogenase (Pyrococcus furiosus (strain ATCC 43587 / DSM 3638 / JCM 8422 / Vc1)).